The primary structure comprises 572 residues: Phosphoenolpyruvate-protein phosphotransferase (572 aa).

His191 functions as the Tele-phosphohistidine intermediate in the catalytic mechanism. 2 residues coordinate phosphoenolpyruvate: Arg298 and Arg334. Mg(2+) is bound by residues Glu433 and Asp457. Residues 456-457 (ND) and Arg467 contribute to the phosphoenolpyruvate site. The active-site Proton donor is the Cys504.

The protein belongs to the PEP-utilizing enzyme family. As to quaternary structure, homodimer. Mg(2+) is required as a cofactor.

It localises to the cytoplasm. It catalyses the reaction L-histidyl-[protein] + phosphoenolpyruvate = N(pros)-phospho-L-histidyl-[protein] + pyruvate. In terms of biological role, general (non sugar-specific) component of the phosphoenolpyruvate-dependent sugar phosphotransferase system (sugar PTS). This major carbohydrate active-transport system catalyzes the phosphorylation of incoming sugar substrates concomitantly with their translocation across the cell membrane. Enzyme I transfers the phosphoryl group from phosphoenolpyruvate (PEP) to the phosphoryl carrier protein (HPr). The chain is Phosphoenolpyruvate-protein phosphotransferase from Staphylococcus aureus (strain MSSA476).